The following is a 605-amino-acid chain: UvrABC system protein C (605 aa).

Residues 13 to 92 (SEPGVYLMKD…IKRYRPKYNV (80 aa)) enclose the GIY-YIG domain. In terms of domain architecture, UVR spans 205–240 (EKLMELLKEKMNESSMNFRFEEAAVYRDKIKSLEEM).

The protein belongs to the UvrC family. In terms of assembly, interacts with UvrB in an incision complex.

The protein resides in the cytoplasm. The UvrABC repair system catalyzes the recognition and processing of DNA lesions. UvrC both incises the 5' and 3' sides of the lesion. The N-terminal half is responsible for the 3' incision and the C-terminal half is responsible for the 5' incision. The polypeptide is UvrABC system protein C (Clostridioides difficile (strain 630) (Peptoclostridium difficile)).